The chain runs to 314 residues: Methionyl-tRNA formyltransferase (314 aa).

Ser-110 to Pro-113 contributes to the (6S)-5,6,7,8-tetrahydrofolate binding site.

Belongs to the Fmt family.

The enzyme catalyses L-methionyl-tRNA(fMet) + (6R)-10-formyltetrahydrofolate = N-formyl-L-methionyl-tRNA(fMet) + (6S)-5,6,7,8-tetrahydrofolate + H(+). Attaches a formyl group to the free amino group of methionyl-tRNA(fMet). The formyl group appears to play a dual role in the initiator identity of N-formylmethionyl-tRNA by promoting its recognition by IF2 and preventing the misappropriation of this tRNA by the elongation apparatus. This is Methionyl-tRNA formyltransferase from Levilactobacillus brevis (strain ATCC 367 / BCRC 12310 / CIP 105137 / JCM 1170 / LMG 11437 / NCIMB 947 / NCTC 947) (Lactobacillus brevis).